Here is a 93-residue protein sequence, read N- to C-terminus: Co-chaperonin GroES (93 aa).

It belongs to the GroES chaperonin family. Heptamer of 7 subunits arranged in a ring. Interacts with the chaperonin GroEL.

Its subcellular location is the cytoplasm. Functionally, together with the chaperonin GroEL, plays an essential role in assisting protein folding. The GroEL-GroES system forms a nano-cage that allows encapsulation of the non-native substrate proteins and provides a physical environment optimized to promote and accelerate protein folding. GroES binds to the apical surface of the GroEL ring, thereby capping the opening of the GroEL channel. The protein is Co-chaperonin GroES of Geobacillus kaustophilus (strain HTA426).